We begin with the raw amino-acid sequence, 537 residues long: Apoptosis inhibitor 5-like protein API5 (537 aa).

The ARM-like and Heat-like helical repeats stretch occupies residues Ala-9 to Ile-363. A disordered region spans residues Trp-465–Arg-537. Positions Pro-474–Ala-492 are enriched in polar residues.

This sequence belongs to the API5 family. Interacts with AIP1 and AIP2.

Its subcellular location is the nucleus. In terms of biological role, putative anti-apoptotic factor involved in the regulation of tapetal programmed cell death (PCD) and degeneration during anther development. Interacts directly with the DEAD-box ATP-dependent RNA helicases AIP1 and AIP2 that form dimers and bind the promoter region of the cysteine protease CP1 involved in tapetum PCD. The protein is Apoptosis inhibitor 5-like protein API5 of Oryza sativa subsp. japonica (Rice).